Reading from the N-terminus, the 249-residue chain is 4-hydroxy-tetrahydrodipicolinate reductase (249 aa).

NAD(+)-binding positions include D32, 74–76 (GTT), and 99–102 (SANF). H134 serves as the catalytic Proton donor/acceptor. Residue H135 participates in (S)-2,3,4,5-tetrahydrodipicolinate binding. K138 functions as the Proton donor in the catalytic mechanism. Residue 144–145 (GT) coordinates (S)-2,3,4,5-tetrahydrodipicolinate.

The protein belongs to the DapB family.

The protein resides in the cytoplasm. The catalysed reaction is (S)-2,3,4,5-tetrahydrodipicolinate + NAD(+) + H2O = (2S,4S)-4-hydroxy-2,3,4,5-tetrahydrodipicolinate + NADH + H(+). The enzyme catalyses (S)-2,3,4,5-tetrahydrodipicolinate + NADP(+) + H2O = (2S,4S)-4-hydroxy-2,3,4,5-tetrahydrodipicolinate + NADPH + H(+). It participates in amino-acid biosynthesis; L-lysine biosynthesis via DAP pathway; (S)-tetrahydrodipicolinate from L-aspartate: step 4/4. Its function is as follows. Catalyzes the conversion of 4-hydroxy-tetrahydrodipicolinate (HTPA) to tetrahydrodipicolinate. In Chlorobaculum parvum (strain DSM 263 / NCIMB 8327) (Chlorobium vibrioforme subsp. thiosulfatophilum), this protein is 4-hydroxy-tetrahydrodipicolinate reductase.